A 728-amino-acid polypeptide reads, in one-letter code: Protein Hook homolog 1 (728 aa).

At Met1 the chain carries N-acetylmethionine. The sufficient for interaction with microtubules stretch occupies residues 1–555 (MEETQPPPQP…LKQKLEAHME (555 aa)). Positions 12–128 (LPLCDSLMIW…RLLQLILGCA (117 aa)) constitute a Calponin-homology (CH) domain. Coiled-coil stretches lie at residues 169–434 (PNDA…RCSQ) and 477–658 (LRLQ…AKFR). The tract at residues 169-444 (PNDAVGELEQ…VQQDHLNQTD (276 aa)) is sufficient for homodimerization, interaction wit HOOK2, HOOK3 and AP4M1. Ser235 carries the phosphoserine modification. Residues 481 to 512 (QEGSENERIEELQEQLEQKHRKMNELETEQRL) are disordered. Basic and acidic residues predominate over residues 503–512 (MNELETEQRL). The segment at 657 to 728 (FRDYEEKLIV…SVKVPATTSD (72 aa)) is sufficient for interaction with AKTIP and VPS18. Phosphothreonine is present on Thr699. Residues Ser719 and Ser727 each carry the phosphoserine modification.

The protein belongs to the hook family. Self-associates. Component of the FTS/Hook/FHIP complex (FHF complex), composed of AKTIP/FTS, FHIP1B, and one or more members of the Hook family of proteins HOOK1, HOOK2, and HOOK3. Interacts directly with AKTIP/FTS, HOOK2 and HOOK3. Associates with several subunits of the homotypic vesicular sorting complex (the HOPS complex) including VPS16, VPS18, VPS39 and VPS41; these interactions may be indirect. Interacts with CCDC181. Interacts (via coiled-coil region) with RIMBP3 (via C-terminus). Interacts with LRGUK (via guanylate kinase-like domain). Interacts with microtubules. May interact with CLN3. Interacts with AP4M1; the interaction is direct, mediates the interaction between FTS-Hook-FHIP (FHF) complex and AP-4 and the perinuclear distribution of AP-4.

Its subcellular location is the cytoplasm. It localises to the cytoskeleton. Component of the FTS/Hook/FHIP complex (FHF complex). The FHF complex may function to promote vesicle trafficking and/or fusion via the homotypic vesicular protein sorting complex (the HOPS complex). FHF complex promotes the distribution of AP-4 complex to the perinuclear area of the cell. Required for spermatid differentiation. Probably involved in the positioning of the microtubules of the manchette and the flagellum in relation to the membrane skeleton. This Homo sapiens (Human) protein is Protein Hook homolog 1.